Reading from the N-terminus, the 249-residue chain is Electron transfer flavoprotein subunit beta (249 aa).

The protein belongs to the ETF beta-subunit/FixA family. In terms of assembly, heterodimer of an alpha and a beta subunit. FAD is required as a cofactor. AMP serves as cofactor.

In terms of biological role, the electron transfer flavoprotein serves as a specific electron acceptor for other dehydrogenases. It transfers the electrons to the main respiratory chain via ETF-ubiquinone oxidoreductase (ETF dehydrogenase). The polypeptide is Electron transfer flavoprotein subunit beta (etfB) (Pseudomonas aeruginosa (strain ATCC 15692 / DSM 22644 / CIP 104116 / JCM 14847 / LMG 12228 / 1C / PRS 101 / PAO1)).